A 377-amino-acid polypeptide reads, in one-letter code: Protein FAM199X-B (377 aa).

A compositionally biased stretch (basic and acidic residues) spans 240 to 254; sequence KEHSPRQRCTRESWK. The segment at 240-350 is disordered; sequence KEHSPRQRCT…EQRQARKERI (111 aa). The span at 256-301 shows a compositional bias: low complexity; that stretch reads TSYSTASTSGVSGASVSSSSASMVSTASSTGSSGGNSASNSSANMS. Positions 319–338 are enriched in basic residues; sequence DSKKRSKQRKLQQKALRKRQ. Residues 321 to 349 are a coiled coil; sequence KKRSKQRKLQQKALRKRQLKEQRQARKER. Positions 339-350 are enriched in basic and acidic residues; it reads LKEQRQARKERI.

It belongs to the FAM199 family.

The protein is Protein FAM199X-B (fam199x-b) of Xenopus laevis (African clawed frog).